A 335-amino-acid chain; its full sequence is Glyceraldehyde-3-phosphate dehydrogenase (335 aa).

Residues 15–16 and aspartate 37 each bind NAD(+); that span reads RI. D-glyceraldehyde 3-phosphate-binding positions include 155–157, threonine 186, arginine 201, 214–215, and arginine 237; these read SCT and TG. Cysteine 156 serves as the catalytic Nucleophile. Residues glutamine 301 and asparagine 318 each contribute to the NAD(+) site.

The protein belongs to the glyceraldehyde-3-phosphate dehydrogenase family. In terms of assembly, homotetramer.

The protein localises to the cytoplasm. The enzyme catalyses D-glyceraldehyde 3-phosphate + phosphate + NADP(+) = (2R)-3-phospho-glyceroyl phosphate + NADPH + H(+). It catalyses the reaction D-glyceraldehyde 3-phosphate + phosphate + NAD(+) = (2R)-3-phospho-glyceroyl phosphate + NADH + H(+). It participates in carbohydrate degradation; glycolysis; pyruvate from D-glyceraldehyde 3-phosphate: step 1/5. The protein is Glyceraldehyde-3-phosphate dehydrogenase (gap) of Haloarcula vallismortis (Halobacterium vallismortis).